A 252-amino-acid polypeptide reads, in one-letter code: 3-dehydroquinate dehydratase (252 aa).

Residues serine 21, 46–48, and arginine 82 each bind 3-dehydroquinate; that span reads EWR. Catalysis depends on histidine 143, which acts as the Proton donor/acceptor. The active-site Schiff-base intermediate with substrate is lysine 170. Positions 213, 232, and 236 each coordinate 3-dehydroquinate.

It belongs to the type-I 3-dehydroquinase family. As to quaternary structure, homodimer.

The enzyme catalyses 3-dehydroquinate = 3-dehydroshikimate + H2O. Its pathway is metabolic intermediate biosynthesis; chorismate biosynthesis; chorismate from D-erythrose 4-phosphate and phosphoenolpyruvate: step 3/7. Functionally, involved in the third step of the chorismate pathway, which leads to the biosynthesis of aromatic amino acids. Catalyzes the cis-dehydration of 3-dehydroquinate (DHQ) and introduces the first double bond of the aromatic ring to yield 3-dehydroshikimate. In Shigella boydii serotype 4 (strain Sb227), this protein is 3-dehydroquinate dehydratase.